The chain runs to 676 residues: E3 ubiquitin-protein ligase ICP0 (676 aa).

The RING-type zinc finger occupies 13-52; that stretch reads CCICLDAITGAARALPCLHAFCLACIRRWLEGRPTCPLCK. 3 disordered regions span residues 101–153, 266–517, and 555–676; these read DLTA…GGRA, HLIP…AGAQ, and AAIS…AWRQ. Positions 123–153 are enriched in gly residues; the sequence is EAGGGAGGAEEAGEARGAGAGRAAGAAGGRA. A compositionally biased stretch (acidic residues) spans 286 to 303; sequence SDSDSEGSEDDSWSESEE. Residues 304–314 are compositionally biased toward low complexity; the sequence is SSSGLSTSDLT. Over residues 315-328 the composition is skewed to acidic residues; the sequence is AIDDTETEPETDAE. Positions 351–361 are enriched in polar residues; that stretch reads YVSTRGRQTPA. 2 stretches are compositionally biased toward low complexity: residues 375–388 and 397–411; these read GRAAAVSAPPSSRS and LPAAPRAAPAAQARA. Positions 422–439 are enriched in gly residues; that stretch reads GAGLGVAAGETAGWGAGS. The segment covering 440-450 has biased composition (basic and acidic residues); the sequence is EEGRGERRARL. The segment covering 474–484 has biased composition (pro residues); it reads TPAPAPAPAPA. The segment covering 555-597 has biased composition (low complexity); that stretch reads AAISTRAPTPSPAGRAPAADPRRAGAPALAGAARAEVGRNGNP.

The protein belongs to the simplexviruses ICp0 family. In terms of processing, auto-ubiquitinated. Transactivation activity is possibly regulated through phosphorylation by casein kinase II.

The catalysed reaction is S-ubiquitinyl-[E2 ubiquitin-conjugating enzyme]-L-cysteine + [acceptor protein]-L-lysine = [E2 ubiquitin-conjugating enzyme]-L-cysteine + N(6)-ubiquitinyl-[acceptor protein]-L-lysine.. Evades nuclear antiviral defenses triggered by dsDNA viruses. Acts during the initial stages of lytic infection and the reactivation of latent viral genome. Prevents the antiviral effect of nuclear bodies by degrading host PML and SP100. This is E3 ubiquitin-protein ligase ICP0 (BICP0) from Bovine herpesvirus 1.1 (strain Cooper) (BoHV-1).